The following is a 539-amino-acid chain: O-phosphoserine--tRNA(Cys) ligase (539 aa).

Substrate is bound by residues 188–190 (HMT), 233–235 (SAS), 275–276 (YY), and asparagine 327.

This sequence belongs to the class-II aminoacyl-tRNA synthetase family. O-phosphoseryl-tRNA(Cys) synthetase subfamily. Homotetramer. Interacts with SepCysS.

The catalysed reaction is tRNA(Cys) + O-phospho-L-serine + ATP = O-phospho-L-seryl-tRNA(Cys) + AMP + diphosphate. Its function is as follows. Catalyzes the attachment of O-phosphoserine (Sep) to tRNA(Cys). This Methanosarcina acetivorans (strain ATCC 35395 / DSM 2834 / JCM 12185 / C2A) protein is O-phosphoserine--tRNA(Cys) ligase.